The sequence spans 145 residues: D-aminoacyl-tRNA deacylase (145 aa).

A Gly-cisPro motif, important for rejection of L-amino acids motif is present at residues 137–138; it reads GP.

It belongs to the DTD family. Homodimer.

It is found in the cytoplasm. It catalyses the reaction glycyl-tRNA(Ala) + H2O = tRNA(Ala) + glycine + H(+). The catalysed reaction is a D-aminoacyl-tRNA + H2O = a tRNA + a D-alpha-amino acid + H(+). An aminoacyl-tRNA editing enzyme that deacylates mischarged D-aminoacyl-tRNAs. Also deacylates mischarged glycyl-tRNA(Ala), protecting cells against glycine mischarging by AlaRS. Acts via tRNA-based rather than protein-based catalysis; rejects L-amino acids rather than detecting D-amino acids in the active site. By recycling D-aminoacyl-tRNA to D-amino acids and free tRNA molecules, this enzyme counteracts the toxicity associated with the formation of D-aminoacyl-tRNA entities in vivo and helps enforce protein L-homochirality. This chain is D-aminoacyl-tRNA deacylase, found in Photobacterium profundum (strain SS9).